The sequence spans 617 residues: Putative type VI secretion system protein VgrGA (617 aa).

Disordered stretches follow at residues 325-344 and 449-469; these read GQQPQALEEESGGEPTTLSN and RTFHATNPSPYPLPASKTRTS.

Belongs to the VgrG protein family.

In terms of biological role, a Vgr protein that is probably part of a type VI secretion system (T6SS). May be required for export of proteins involved in Rhs-mediated cellular contact-dependent growth inhibition (CDI). The chain is Putative type VI secretion system protein VgrGA (vgrGA) from Dickeya dadantii (strain 3937) (Erwinia chrysanthemi (strain 3937)).